Here is a 162-residue protein sequence, read N- to C-terminus: uncharacterized protein (162 aa).

The region spanning Leu-6–Val-71 is the HTH asnC-type domain. Residues Ile-25 to Lys-44 constitute a DNA-binding region (H-T-H motif).

This is an uncharacterized protein from Pyrococcus abyssi (strain GE5 / Orsay).